The primary structure comprises 386 residues: Glutamate 5-kinase (386 aa).

Lys28 contacts ATP. Positions 68, 155, and 167 each coordinate substrate. 187–188 (TD) is a binding site for ATP. The 79-residue stretch at 294-372 (RGRLVLDDGA…EKIESILGYI (79 aa)) folds into the PUA domain.

It belongs to the glutamate 5-kinase family.

Its subcellular location is the cytoplasm. The catalysed reaction is L-glutamate + ATP = L-glutamyl 5-phosphate + ADP. It participates in amino-acid biosynthesis; L-proline biosynthesis; L-glutamate 5-semialdehyde from L-glutamate: step 1/2. Its function is as follows. Catalyzes the transfer of a phosphate group to glutamate to form L-glutamate 5-phosphate. The polypeptide is Glutamate 5-kinase (Hahella chejuensis (strain KCTC 2396)).